A 287-amino-acid chain; its full sequence is ATP synthase gamma chain (287 aa).

It belongs to the ATPase gamma chain family. F-type ATPases have 2 components, CF(1) - the catalytic core - and CF(0) - the membrane proton channel. CF(1) has five subunits: alpha(3), beta(3), gamma(1), delta(1), epsilon(1). CF(0) has three main subunits: a, b and c.

Its subcellular location is the cell inner membrane. Its function is as follows. Produces ATP from ADP in the presence of a proton gradient across the membrane. The gamma chain is believed to be important in regulating ATPase activity and the flow of protons through the CF(0) complex. This Ruthia magnifica subsp. Calyptogena magnifica protein is ATP synthase gamma chain.